The chain runs to 328 residues: Ribosomal RNA large subunit methyltransferase F (328 aa).

The disordered stretch occupies residues Met1–Asn31.

This sequence belongs to the methyltransferase superfamily. METTL16/RlmF family.

It localises to the cytoplasm. It carries out the reaction adenosine(1618) in 23S rRNA + S-adenosyl-L-methionine = N(6)-methyladenosine(1618) in 23S rRNA + S-adenosyl-L-homocysteine + H(+). Functionally, specifically methylates the adenine in position 1618 of 23S rRNA. The polypeptide is Ribosomal RNA large subunit methyltransferase F (Pseudomonas savastanoi pv. phaseolicola (strain 1448A / Race 6) (Pseudomonas syringae pv. phaseolicola (strain 1448A / Race 6))).